The chain runs to 150 residues: Large ribosomal subunit protein bL9 (150 aa).

The protein belongs to the bacterial ribosomal protein bL9 family.

In terms of biological role, binds to the 23S rRNA. The polypeptide is Large ribosomal subunit protein bL9 (Erwinia tasmaniensis (strain DSM 17950 / CFBP 7177 / CIP 109463 / NCPPB 4357 / Et1/99)).